We begin with the raw amino-acid sequence, 363 residues long: Small ribosomal subunit biogenesis GTPase RsgA (363 aa).

One can recognise a CP-type G domain in the interval 112-268 (HQQVIAANID…LIDTPGMREL (157 aa)). GTP is bound by residues 157 to 160 (TKAD) and 210 to 218 (GSSGAGKST). Residues C291, C296, H298, and C304 each contribute to the Zn(2+) site. The segment at 340–363 (RVAQNNRGKGSGKRPASIDRPGRR) is disordered.

Belongs to the TRAFAC class YlqF/YawG GTPase family. RsgA subfamily. In terms of assembly, monomer. Associates with 30S ribosomal subunit, binds 16S rRNA. Zn(2+) serves as cofactor.

It localises to the cytoplasm. In terms of biological role, one of several proteins that assist in the late maturation steps of the functional core of the 30S ribosomal subunit. Helps release RbfA from mature subunits. May play a role in the assembly of ribosomal proteins into the subunit. Circularly permuted GTPase that catalyzes slow GTP hydrolysis, GTPase activity is stimulated by the 30S ribosomal subunit. The protein is Small ribosomal subunit biogenesis GTPase RsgA of Xanthomonas oryzae pv. oryzae (strain MAFF 311018).